A 1101-amino-acid chain; its full sequence is Error-prone DNA polymerase (1101 aa).

The interval A1055–H1101 is disordered. The segment covering V1065–S1074 has biased composition (polar residues). The segment covering H1086–H1101 has biased composition (basic and acidic residues).

This sequence belongs to the DNA polymerase type-C family. DnaE2 subfamily.

It localises to the cytoplasm. The catalysed reaction is DNA(n) + a 2'-deoxyribonucleoside 5'-triphosphate = DNA(n+1) + diphosphate. Its function is as follows. DNA polymerase involved in damage-induced mutagenesis and translesion synthesis (TLS). It is not the major replicative DNA polymerase. The sequence is that of Error-prone DNA polymerase from Ruegeria pomeroyi (strain ATCC 700808 / DSM 15171 / DSS-3) (Silicibacter pomeroyi).